The sequence spans 1478 residues: Serine/threonine-protein kinase BCK1/SLK1/SSP31 (1478 aa).

Disordered stretches follow at residues 1–70, 99–126, 217–359, and 373–427; these read MPFL…TSSQ, TSFT…GGNS, NVTN…RRHH, and FGSG…KGNL. The segment covering 29 to 49 has biased composition (low complexity); that stretch reads PTSSVASTKSSSKSPRATSRK. 2 stretches are compositionally biased toward polar residues: residues 58-70 and 99-110; these read QFPN…TSSQ and TSFTNSSYKNDN. The span at 111–126 shows a compositional bias: low complexity; that stretch reads GPSSLSDSRKSSGGNS. Residues 223 to 233 are compositionally biased toward basic residues; the sequence is IRQKSASKLKS. Composition is skewed to polar residues over residues 253–273 and 281–297; these read DISN…SGPS and LHST…SSLY. Low complexity-rich tracts occupy residues 298 to 320 and 342 to 353; these read RRSF…SPSN and SASPPASPSYPS. 2 stretches are compositionally biased toward polar residues: residues 386–396 and 407–420; these read NPQGHSLSSEN and TNVS…SLPT. Threonine 407 carries the post-translational modification Phosphothreonine. Phosphoserine occurs at positions 411 and 491. Positions 644 to 671 are disordered; the sequence is KPKPAPLTSENNVPLKSVKSKSSMRSGT. Residues 659-671 show a composition bias toward low complexity; the sequence is KSVKSKSSMRSGT. The residue at position 747 (serine 747) is a Phosphoserine. Disordered stretches follow at residues 752–877, 895–939, 960–1021, and 1053–1116; these read LNLP…ASTH, KTDQ…RGNS, ADAP…TQDK, and TEGI…TPKR. Residues 765 to 777 show a composition bias toward polar residues; that stretch reads TPITENESKSSFQ. Over residues 779 to 809 the composition is skewed to basic and acidic residues; sequence LRKDEGTEIDFNHRRESPYTKPELAPKREAP. A compositionally biased stretch (polar residues) spans 813–827; that stretch reads ANTSPQRTLSTSKQN. Residue serine 816 is modified to Phosphoserine. Low complexity-rich tracts occupy residues 851 to 870 and 914 to 925; these read QLLS…LTSS and NRSNSTVSTSNS. A compositionally biased stretch (acidic residues) spans 967-977; it reads DSDDSDDDSSS. The segment covering 994–1011 has biased composition (basic and acidic residues); sequence NENKKDEKSDNSSTHSDE. Phosphoserine is present on residues serine 1058 and serine 1061. Residues 1058–1083 show a composition bias toward low complexity; sequence SPTSPKSLDSLLSPKNVASSRTEPST. Residue serine 1134 is modified to Phosphoserine; by PKC. One can recognise a Protein kinase domain in the interval 1175–1440; sequence WMKGEMIGKG…ANELLSHPFS (266 aa). Residues 1181-1189 and lysine 1204 contribute to the ATP site; that span reads IGKGSFGAV. Aspartate 1303 functions as the Proton acceptor in the catalytic mechanism.

This sequence belongs to the protein kinase superfamily. STE Ser/Thr protein kinase family. MAP kinase kinase kinase subfamily.

It is found in the cytoplasm. It carries out the reaction L-seryl-[protein] + ATP = O-phospho-L-seryl-[protein] + ADP + H(+). The catalysed reaction is L-threonyl-[protein] + ATP = O-phospho-L-threonyl-[protein] + ADP + H(+). Serine/threonine protein kinase involved in a signal transduction pathway that plays a role in yeast cell morphogenesis and cell growth. This pathway seems to start by SMP3; then involve the kinase PKC1 that may act on this kinase. BCK1 probably phosphorylates MKK1 and MKK2 which themselves phosphorylate the MPK1 kinase. In Saccharomyces cerevisiae (strain ATCC 204508 / S288c) (Baker's yeast), this protein is Serine/threonine-protein kinase BCK1/SLK1/SSP31 (BCK1).